Here is a 77-residue protein sequence, read N- to C-terminus: uncharacterized protein (77 aa).

Over residues 1 to 10 (MFNNKGRRNV) the composition is skewed to basic residues. The interval 1–21 (MFNNKGRRNVRNNEVRRNVPV) is disordered. Basic and acidic residues predominate over residues 11–21 (RNNEVRRNVPV). Residues 20–77 (PVKEGETYTVTIEDMGRGGDGIARVEGFVVFVPETQKGETVNVKITAVKSKFAFAEKI) form the TRAM domain.

This is an uncharacterized protein from Methanocaldococcus jannaschii (strain ATCC 43067 / DSM 2661 / JAL-1 / JCM 10045 / NBRC 100440) (Methanococcus jannaschii).